We begin with the raw amino-acid sequence, 303 residues long: MIVTGATNVKSTELSETARAKVNLTLRVVGRRADGFHDLESVVAFADCVDRLTLMPGTDLSLVAGGPRAQECGQAADNLVLKAARLLGERVANLTTGVFALDKHLPVAAGIGGGSADAAAALRLLARANGIAIGDPRLIEAARLTGADVPVCVCSEACVMTGVGETLQPLGLPAMPAVLVNPRVPVATKDVFAALGLRKGELHVGVSDVIEAIVWPKTGAPMNDWLAMLADGTNDLEPPAIRVQPVIGEVLARLRATGARLSRMSGSGATCFAIFGNEADARNAAQTIRLDRPQWWVHAGTLS.

Residue lysine 21 is part of the active site. Residue 106 to 116 participates in ATP binding; sequence PVAAGIGGGSA. The active site involves aspartate 148.

It belongs to the GHMP kinase family. IspE subfamily.

It carries out the reaction 4-CDP-2-C-methyl-D-erythritol + ATP = 4-CDP-2-C-methyl-D-erythritol 2-phosphate + ADP + H(+). It participates in isoprenoid biosynthesis; isopentenyl diphosphate biosynthesis via DXP pathway; isopentenyl diphosphate from 1-deoxy-D-xylulose 5-phosphate: step 3/6. In terms of biological role, catalyzes the phosphorylation of the position 2 hydroxy group of 4-diphosphocytidyl-2C-methyl-D-erythritol. The chain is 4-diphosphocytidyl-2-C-methyl-D-erythritol kinase from Nitrobacter hamburgensis (strain DSM 10229 / NCIMB 13809 / X14).